The sequence spans 724 residues: Probable serine/threonine-protein kinase KKQ8 (724 aa).

2 disordered regions span residues Met-1–Ser-81 and His-93–Leu-188. Phosphoserine is present on Ser-19. Over residues Pro-45 to Lys-54 the composition is skewed to low complexity. Polar residues predominate over residues Phe-95 to Pro-106. Residues Arg-143–Ser-162 show a composition bias toward low complexity. Phosphoserine is present on residues Ser-232, Ser-238, and Ser-241. Composition is skewed to polar residues over residues Asn-318 to Ser-329 and Gly-338 to Gln-351. Residues Asn-318–Asp-355 form a disordered region. One can recognise a Protein kinase domain in the interval Gly-412–Met-712. ATP contacts are provided by residues Val-418–Val-426 and Lys-455. Asp-563 functions as the Proton acceptor in the catalytic mechanism.

The protein belongs to the protein kinase superfamily. CAMK Ser/Thr protein kinase family. NPR/HAL subfamily. HAL5 sub-subfamily.

The protein localises to the cytoplasm. It catalyses the reaction L-seryl-[protein] + ATP = O-phospho-L-seryl-[protein] + ADP + H(+). The enzyme catalyses L-threonyl-[protein] + ATP = O-phospho-L-threonyl-[protein] + ADP + H(+). The chain is Probable serine/threonine-protein kinase KKQ8 (KKQ8) from Saccharomyces cerevisiae (strain YJM789) (Baker's yeast).